The chain runs to 446 residues: C-type lectin domain family 18 member C (446 aa).

A signal peptide spans 1-26 (MLHPETSPGRGHLLAVLLALLGTAWA). Residues 52–182 (LSLHNRLRSW…AAIEAFVCAY (131 aa)) form the SCP domain. Residue N144 is glycosylated (N-linked (GlcNAc...) asparagine). Residues 228–261 (PRNPCRMSCQNHGRLNISTCHCHCPPGYTGRYCQ) form the EGF-like domain. 4 disulfides stabilise this stretch: C236–C249, C251–C260, C327–C432, and C408–C424. In terms of domain architecture, C-type lectin spans 306-433 (IDGDCFMVSS…CKTRNRYICQ (128 aa)).

As to expression, detected in peripheral blood cells.

Its subcellular location is the secreted. The protein resides in the endoplasmic reticulum. It is found in the golgi apparatus. The protein localises to the endosome. Functionally, binds polysaccharidesin a Ca(2+)-independent manner with a preferentially binding to fucoidan, beta-glucans and galactans. This is C-type lectin domain family 18 member C (CLEC18C) from Homo sapiens (Human).